A 237-amino-acid chain; its full sequence is Phosphoribosylaminoimidazole-succinocarboxamide synthase (237 aa).

Belongs to the SAICAR synthetase family.

It carries out the reaction 5-amino-1-(5-phospho-D-ribosyl)imidazole-4-carboxylate + L-aspartate + ATP = (2S)-2-[5-amino-1-(5-phospho-beta-D-ribosyl)imidazole-4-carboxamido]succinate + ADP + phosphate + 2 H(+). The protein operates within purine metabolism; IMP biosynthesis via de novo pathway; 5-amino-1-(5-phospho-D-ribosyl)imidazole-4-carboxamide from 5-amino-1-(5-phospho-D-ribosyl)imidazole-4-carboxylate: step 1/2. The chain is Phosphoribosylaminoimidazole-succinocarboxamide synthase from Alteromonas mediterranea (strain DSM 17117 / CIP 110805 / LMG 28347 / Deep ecotype).